The following is a 177-amino-acid chain: Large ribosomal subunit protein uL6 (177 aa).

The protein belongs to the universal ribosomal protein uL6 family. Part of the 50S ribosomal subunit.

Functionally, this protein binds to the 23S rRNA, and is important in its secondary structure. It is located near the subunit interface in the base of the L7/L12 stalk, and near the tRNA binding site of the peptidyltransferase center. The protein is Large ribosomal subunit protein uL6 of Neisseria meningitidis serogroup C (strain 053442).